Here is a 234-residue protein sequence, read N- to C-terminus: 7-cyano-7-deazaguanine synthase (234 aa).

Residue 13–23 coordinates ATP; it reads FSGGIDSTTCL. Zn(2+) is bound by residues Cys197, Cys207, Cys210, and Cys213.

The protein belongs to the QueC family. Requires Zn(2+) as cofactor.

The enzyme catalyses 7-carboxy-7-deazaguanine + NH4(+) + ATP = 7-cyano-7-deazaguanine + ADP + phosphate + H2O + H(+). The protein operates within purine metabolism; 7-cyano-7-deazaguanine biosynthesis. Its function is as follows. Catalyzes the ATP-dependent conversion of 7-carboxy-7-deazaguanine (CDG) to 7-cyano-7-deazaguanine (preQ(0)). This Syntrophobacter fumaroxidans (strain DSM 10017 / MPOB) protein is 7-cyano-7-deazaguanine synthase.